We begin with the raw amino-acid sequence, 67 residues long: Alpha-conotoxin-like Pu1.1 (67 aa).

Residues 1-21 (MGMRMMFTVFLLVVLATTVVS) form the signal peptide. Positions 22–46 (FTSDRTSDGRNAAFNAFDLIALTAR) are excised as a propeptide. Gln47 bears the Pyrrolidone carboxylic acid mark. Intrachain disulfides connect Cys49/Cys55 and Cys50/Cys63. Positions 51–53 (NVP) are lacks the Ser-Xaa-Pro motif that is crucial for potent interaction with nAChR. Cys63 bears the Cysteine amide mark.

It belongs to the conotoxin A superfamily. In terms of tissue distribution, expressed by the venom duct.

The protein resides in the secreted. In terms of biological role, alpha-conotoxins act on postsynaptic membranes, they bind to the nicotinic acetylcholine receptors (nAChR) and thus inhibit them. Has possibly a distinct nAChR binding mode from other alpha-conotoxins, due to a different three residue motif (lacks the Ser-Xaa-Pro motif). This Conus pulicarius (Flea-bitten cone) protein is Alpha-conotoxin-like Pu1.1.